Here is a 196-residue protein sequence, read N- to C-terminus: ATP-dependent Clp protease proteolytic subunit (196 aa).

Serine 101 (nucleophile) is an active-site residue. The active site involves histidine 126.

Belongs to the peptidase S14 family. As to quaternary structure, component of the chloroplastic Clp protease core complex.

Its subcellular location is the plastid. The protein localises to the chloroplast stroma. It carries out the reaction Hydrolysis of proteins to small peptides in the presence of ATP and magnesium. alpha-casein is the usual test substrate. In the absence of ATP, only oligopeptides shorter than five residues are hydrolyzed (such as succinyl-Leu-Tyr-|-NHMec, and Leu-Tyr-Leu-|-Tyr-Trp, in which cleavage of the -Tyr-|-Leu- and -Tyr-|-Trp bonds also occurs).. Functionally, cleaves peptides in various proteins in a process that requires ATP hydrolysis. Has a chymotrypsin-like activity. Plays a major role in the degradation of misfolded proteins. This is ATP-dependent Clp protease proteolytic subunit from Panax ginseng (Korean ginseng).